Consider the following 106-residue polypeptide: uncharacterized protein (106 aa).

This is an uncharacterized protein from Haemophilus influenzae (strain ATCC 51907 / DSM 11121 / KW20 / Rd).